A 241-amino-acid chain; its full sequence is 1-(5-phosphoribosyl)-5-[(5-phosphoribosylamino)methylideneamino] imidazole-4-carboxamide isomerase (241 aa).

Asp-8 serves as the catalytic Proton acceptor. Residue Asp-130 is the Proton donor of the active site.

The protein belongs to the HisA/HisF family.

The protein localises to the cytoplasm. The catalysed reaction is 1-(5-phospho-beta-D-ribosyl)-5-[(5-phospho-beta-D-ribosylamino)methylideneamino]imidazole-4-carboxamide = 5-[(5-phospho-1-deoxy-D-ribulos-1-ylimino)methylamino]-1-(5-phospho-beta-D-ribosyl)imidazole-4-carboxamide. Its pathway is amino-acid biosynthesis; L-histidine biosynthesis; L-histidine from 5-phospho-alpha-D-ribose 1-diphosphate: step 4/9. The sequence is that of 1-(5-phosphoribosyl)-5-[(5-phosphoribosylamino)methylideneamino] imidazole-4-carboxamide isomerase from Francisella philomiragia subsp. philomiragia (strain ATCC 25017 / CCUG 19701 / FSC 153 / O#319-036).